A 622-amino-acid polypeptide reads, in one-letter code: Interleukin-1 receptor-associated kinase-like 2 (622 aa).

Positions 13 to 94 (LDDLCRNIDT…RAAQIVLSWK (82 aa)) constitute a Death domain. One can recognise a Protein kinase domain in the interval 208-473 (FDQSHRISEG…LPEACEEAWA (266 aa)). Residues 214 to 222 (ISEGTFADI), lysine 235, and 335 to 338 (KSAN) each bind ATP. Disordered stretches follow at residues 511 to 532 (RVSE…VDNS) and 553 to 591 (LFTG…ETSW). Polar residues-rich tracts occupy residues 513–523 (SEATGSSSNTP) and 561–590 (QPST…TETS).

The protein belongs to the protein kinase superfamily. TKL Ser/Thr protein kinase family. Pelle subfamily. In terms of assembly, interacts with MYD88. IL-1 stimulation leads to the formation of a signaling complex which dissociates from the IL-1 receptor following the binding of PELI1. As to expression, ubiquitously expressed, with a higher expression observed in brain, spleen and liver. Isoform 1 and isoform 2 are considered agonist and isoform 3 and isoform 4 are considered antagonist.

Functionally, binds to the IL-1 type I receptor following IL-1 engagement, triggering intracellular signaling cascades leading to transcriptional up-regulation and mRNA stabilization. This chain is Interleukin-1 receptor-associated kinase-like 2 (Irak2), found in Mus musculus (Mouse).